A 217-amino-acid chain; its full sequence is Thymidylate kinase (217 aa).

14–21 (GNEGSGKT) lines the ATP pocket.

It belongs to the thymidylate kinase family.

The catalysed reaction is dTMP + ATP = dTDP + ADP. Phosphorylation of dTMP to form dTDP in both de novo and salvage pathways of dTTP synthesis. The sequence is that of Thymidylate kinase from Orientia tsutsugamushi (strain Ikeda) (Rickettsia tsutsugamushi).